A 407-amino-acid polypeptide reads, in one-letter code: Argininosuccinate synthase (407 aa).

ATP contacts are provided by residues 12-20 (AYSGGLDTS) and Ala-39. Tyr-92 and Ser-97 together coordinate L-citrulline. Residue Gly-122 coordinates ATP. Thr-124, Asn-128, and Asp-129 together coordinate L-aspartate. Asn-128 serves as a coordination point for L-citrulline. Residues Arg-132, Ser-183, Ser-192, Glu-268, and Tyr-280 each contribute to the L-citrulline site.

This sequence belongs to the argininosuccinate synthase family. Type 1 subfamily. As to quaternary structure, homotetramer.

It is found in the cytoplasm. It catalyses the reaction L-citrulline + L-aspartate + ATP = 2-(N(omega)-L-arginino)succinate + AMP + diphosphate + H(+). The protein operates within amino-acid biosynthesis; L-arginine biosynthesis; L-arginine from L-ornithine and carbamoyl phosphate: step 2/3. This Caulobacter sp. (strain K31) protein is Argininosuccinate synthase.